The chain runs to 367 residues: Ferrochelatase (367 aa).

Histidine 226 and glutamate 307 together coordinate Fe cation.

This sequence belongs to the ferrochelatase family.

The protein localises to the cytoplasm. It carries out the reaction heme b + 2 H(+) = protoporphyrin IX + Fe(2+). Its pathway is porphyrin-containing compound metabolism; protoheme biosynthesis; protoheme from protoporphyrin-IX: step 1/1. Its function is as follows. Catalyzes the ferrous insertion into protoporphyrin IX. This chain is Ferrochelatase, found in Burkholderia pseudomallei (strain 1106a).